The chain runs to 75 residues: Exodeoxyribonuclease 7 small subunit (75 aa).

It belongs to the XseB family. In terms of assembly, heterooligomer composed of large and small subunits.

The protein localises to the cytoplasm. The enzyme catalyses Exonucleolytic cleavage in either 5'- to 3'- or 3'- to 5'-direction to yield nucleoside 5'-phosphates.. Its function is as follows. Bidirectionally degrades single-stranded DNA into large acid-insoluble oligonucleotides, which are then degraded further into small acid-soluble oligonucleotides. In Pelobacter propionicus (strain DSM 2379 / NBRC 103807 / OttBd1), this protein is Exodeoxyribonuclease 7 small subunit.